The following is a 372-amino-acid chain: Putative glutamate--cysteine ligase 2 (372 aa).

Belongs to the glutamate--cysteine ligase type 2 family. YbdK subfamily. In terms of assembly, homodimer.

The catalysed reaction is L-cysteine + L-glutamate + ATP = gamma-L-glutamyl-L-cysteine + ADP + phosphate + H(+). In terms of biological role, ATP-dependent carboxylate-amine ligase which exhibits weak glutamate--cysteine ligase activity. The polypeptide is Putative glutamate--cysteine ligase 2 (ybdK) (Salmonella arizonae (strain ATCC BAA-731 / CDC346-86 / RSK2980)).